Here is a 252-residue protein sequence, read N- to C-terminus: Imidazole glycerol phosphate synthase subunit HisF (252 aa).

Residues D11 and D130 contribute to the active site.

It belongs to the HisA/HisF family. Heterodimer of HisH and HisF.

It localises to the cytoplasm. It catalyses the reaction 5-[(5-phospho-1-deoxy-D-ribulos-1-ylimino)methylamino]-1-(5-phospho-beta-D-ribosyl)imidazole-4-carboxamide + L-glutamine = D-erythro-1-(imidazol-4-yl)glycerol 3-phosphate + 5-amino-1-(5-phospho-beta-D-ribosyl)imidazole-4-carboxamide + L-glutamate + H(+). The protein operates within amino-acid biosynthesis; L-histidine biosynthesis; L-histidine from 5-phospho-alpha-D-ribose 1-diphosphate: step 5/9. Its function is as follows. IGPS catalyzes the conversion of PRFAR and glutamine to IGP, AICAR and glutamate. The HisF subunit catalyzes the cyclization activity that produces IGP and AICAR from PRFAR using the ammonia provided by the HisH subunit. This Sulfurihydrogenibium sp. (strain YO3AOP1) protein is Imidazole glycerol phosphate synthase subunit HisF.